Consider the following 340-residue polypeptide: Anthranilate phosphoribosyltransferase (340 aa).

5-phospho-alpha-D-ribose 1-diphosphate-binding positions include G83, 86-87 (GD), T91, 93-96 (NVST), 111-119 (KHGNRSVSS), and S123. Anthranilate is bound at residue G83. Residue S95 coordinates Mg(2+). An anthranilate-binding site is contributed by N114. R169 lines the anthranilate pocket. Residues D228 and E229 each contribute to the Mg(2+) site.

The protein belongs to the anthranilate phosphoribosyltransferase family. Homodimer. The cofactor is Mg(2+).

The catalysed reaction is N-(5-phospho-beta-D-ribosyl)anthranilate + diphosphate = 5-phospho-alpha-D-ribose 1-diphosphate + anthranilate. It participates in amino-acid biosynthesis; L-tryptophan biosynthesis; L-tryptophan from chorismate: step 2/5. Catalyzes the transfer of the phosphoribosyl group of 5-phosphorylribose-1-pyrophosphate (PRPP) to anthranilate to yield N-(5'-phosphoribosyl)-anthranilate (PRA). This chain is Anthranilate phosphoribosyltransferase, found in Aquifex aeolicus (strain VF5).